The chain runs to 239 residues: Sugar fermentation stimulation protein homolog (239 aa).

This sequence belongs to the SfsA family.

The protein is Sugar fermentation stimulation protein homolog of Rhizobium meliloti (strain 1021) (Ensifer meliloti).